We begin with the raw amino-acid sequence, 126 residues long: MPTVNQLVRQGRTMNKTKTKSPALMSCPQRRGVCTRVYTTTPKKPNSALRKVARVKLTSKVEVTAYIPGVGHNLQEHSIVLVRGGRVKDLPGVRYHIIRGALDASGVENRKQGRSLYGVKRPKAAK.

Positions M1 to K16 are enriched in polar residues. A disordered region spans residues M1–L24. A 3-methylthioaspartic acid modification is found at D89.

Belongs to the universal ribosomal protein uS12 family. In terms of assembly, part of the 30S ribosomal subunit. Contacts proteins S8 and S17. May interact with IF1 in the 30S initiation complex.

Its function is as follows. With S4 and S5 plays an important role in translational accuracy. Interacts with and stabilizes bases of the 16S rRNA that are involved in tRNA selection in the A site and with the mRNA backbone. Located at the interface of the 30S and 50S subunits, it traverses the body of the 30S subunit contacting proteins on the other side and probably holding the rRNA structure together. The combined cluster of proteins S8, S12 and S17 appears to hold together the shoulder and platform of the 30S subunit. In Elusimicrobium minutum (strain Pei191), this protein is Small ribosomal subunit protein uS12.